The sequence spans 551 residues: HTH-type transcriptional regulator SgrR (551 aa).

The HTH marR-type domain occupies 1–116 (MPSARLQQQF…LVSHLGRSFR (116 aa)). The segment at residues 26–49 (LNELAALLSCSRRHMRTLLNTMQD) is a DNA-binding region (H-T-H motif). A solute-binding region spans residues 163–492 (ELEADIAHHW…IDWQADAARW (330 aa)).

Functionally, activates the small RNA gene sgrS under glucose-phosphate stress conditions as well as yfdZ. Represses its own transcription under both stress and non-stress conditions. Might act as a sensor of the intracellular accumulation of phosphoglucose by binding these molecules in its C-terminal solute-binding domain. This is HTH-type transcriptional regulator SgrR from Shigella boydii serotype 4 (strain Sb227).